We begin with the raw amino-acid sequence, 205 residues long: Ribonuclease HII (205 aa).

The RNase H type-2 domain occupies 14 to 205 (ERICGIDEAG…SFKVRRLNEA (192 aa)). A divalent metal cation-binding residues include Asp20, Glu21, and Asp117.

The protein belongs to the RNase HII family. Requires Mn(2+) as cofactor. It depends on Mg(2+) as a cofactor.

It is found in the cytoplasm. It catalyses the reaction Endonucleolytic cleavage to 5'-phosphomonoester.. In terms of biological role, endonuclease that specifically degrades the RNA of RNA-DNA hybrids. This chain is Ribonuclease HII, found in Chlorobium phaeovibrioides (strain DSM 265 / 1930) (Prosthecochloris vibrioformis (strain DSM 265)).